We begin with the raw amino-acid sequence, 464 residues long: ATP synthase subunit beta (464 aa).

Residue 153-160 coordinates ATP; it reads GGAGVGKT.

The protein belongs to the ATPase alpha/beta chains family. As to quaternary structure, F-type ATPases have 2 components, CF(1) - the catalytic core - and CF(0) - the membrane proton channel. CF(1) has five subunits: alpha(3), beta(3), gamma(1), delta(1), epsilon(1). CF(0) has three main subunits: a(1), b(2) and c(9-12). The alpha and beta chains form an alternating ring which encloses part of the gamma chain. CF(1) is attached to CF(0) by a central stalk formed by the gamma and epsilon chains, while a peripheral stalk is formed by the delta and b chains.

The protein resides in the cell inner membrane. The catalysed reaction is ATP + H2O + 4 H(+)(in) = ADP + phosphate + 5 H(+)(out). Its function is as follows. Produces ATP from ADP in the presence of a proton gradient across the membrane. The catalytic sites are hosted primarily by the beta subunits. The protein is ATP synthase subunit beta of Burkholderia lata (strain ATCC 17760 / DSM 23089 / LMG 22485 / NCIMB 9086 / R18194 / 383).